Reading from the N-terminus, the 103-residue chain is Glutaredoxin-C1 (103 aa).

The Glutaredoxin domain maps to 1–102 (MDRVNRLAAQ…PLLRNAGALW (102 aa)). A disulfide bridge links C21 with C24.

Belongs to the glutaredoxin family. CC-type subfamily.

It is found in the cytoplasm. Has a glutathione-disulfide oxidoreductase activity in the presence of NADPH and glutathione reductase. Reduces low molecular weight disulfides and proteins. In Oryza sativa subsp. japonica (Rice), this protein is Glutaredoxin-C1 (GRXC1).